Here is a 296-residue protein sequence, read N- to C-terminus: Small ribosomal subunit protein uS2 (296 aa).

A disordered region spans residues 246-272; it reads QAKDGSVVDSGKGKSIAAHKGGGKASK.

It belongs to the universal ribosomal protein uS2 family.

The protein is Small ribosomal subunit protein uS2 of Anaplasma phagocytophilum (strain HZ).